We begin with the raw amino-acid sequence, 118 residues long: T cell receptor gamma variable 8 (118 aa).

Residues 1–17 form the signal peptide; it reads MLLALALLLAFLPPASQ. An Ig-like domain is found at 18-118; sequence KSSNLEGRTK…GVYYCATWDR (101 aa). The cysteines at positions 41 and 113 are disulfide-linked.

Gamma-delta TR is a heterodimer composed of a gamma and delta chain; disulfide-linked. The gamma-delta TR is associated with the transmembrane signaling CD3 coreceptor proteins following the stoichiometry: a single gamma-delta TR heterodimer associates with one CD3D-CD3E heterodimer, one CD3G-CD3E heterodimer and one CD247 homodimer forming a stable octameric structure. Upon activation, gamma-delta TR complex associates with FCER1G to initiate intracellular signaling.

The protein resides in the cell membrane. V region of the variable domain of T cell receptor (TR) gamma chain that participates in the antigen recognition. Gamma-delta TRs recognize a variety of self and foreign non-peptide antigens frequently expressed at the epithelial boundaries between the host and external environment, including endogenous lipids presented by MH-like protein CD1D and phosphoantigens presented by butyrophilin-like molecule BTN3A1. Upon antigen recognition induces rapid, innate-like immune responses involved in pathogen clearance and tissue repair. Binding of gamma-delta TR complex to antigen triggers phosphorylation of immunoreceptor tyrosine-based activation motifs (ITAMs) in the CD3 chains by the LCK and FYN kinases, allowing the recruitment, phosphorylation, and activation of ZAP70 that facilitates phosphorylation of the scaffolding proteins LCP2 and LAT. This lead to the formation of a supramolecular signalosome that recruits the phospholipase PLCG1, resulting in calcium mobilization and ERK activation, ultimately leading to T cell expansion and differentiation into effector cells. Gamma-delta TRs are produced through somatic rearrangement of a limited repertoire of variable (V), diversity (D), and joining (J) genes. The potential diversity of gamma-delta TRs is conferred by the unique ability to rearrange (D) genes in tandem and to utilize all three reading frames. The combinatorial diversity is considerably increased by the sequence exonuclease trimming and random nucleotide (N) region additions which occur during the V-(D)-J rearrangements. In Homo sapiens (Human), this protein is T cell receptor gamma variable 8.